The chain runs to 80 residues: SPbeta prophage-derived uncharacterized HTH-type transcriptional regulator YotL (80 aa).

An HTH cro/C1-type domain is found at 12 to 67; it reads LNELMHEYSVSIEDLVECTGLSKQRINDYVGGFKSNMNIGTAMTFADAIGCSIEEL. The H-T-H motif DNA-binding region spans 23 to 42; sequence IEDLVECTGLSKQRINDYVG.

In Bacillus subtilis (strain 168), this protein is SPbeta prophage-derived uncharacterized HTH-type transcriptional regulator YotL (yotL).